Here is a 312-residue protein sequence, read N- to C-terminus: MQFTSLEICAGAGGQALGLERAGFSHVALIEIEPSACQTLRLNRPDWNVIEGDVRLFQGEGYDGIDLLAGGVPCPPFSKAGKQLGKDDERDLFPEAIRLAKETDPKAIMLENVRGLLDPKFENYRNHITEQFAKLGYLGQWKLLYAADYGVSQLRPRVLFVALKNEYTNFFKWPEPNSEQPKTVGELLFDLMSENNWQGAHNWRLKAAQIAPTLVAVQKNTAVLTWDLHDPNAHGRSWVWMVQVCGIVRRLKTFTGMPRLTVRMTARIQGFPDDWQFFGKKTPMYRQIGNAFPPPVAEAVGRQIIKALKKEN.

The SAM-dependent MTase C5-type domain occupies 3–311 (FTSLEICAGA…RQIIKALKKE (309 aa)). C74 is an active-site residue.

Belongs to the class I-like SAM-binding methyltransferase superfamily. C5-methyltransferase family.

The catalysed reaction is a 2'-deoxycytidine in DNA + S-adenosyl-L-methionine = a 5-methyl-2'-deoxycytidine in DNA + S-adenosyl-L-homocysteine + H(+). In terms of biological role, a methylase, recognizes the double-stranded sequence 5'-GCCGGC-3', methylates C-2 on both strands, and protects the DNA from cleavage by the NgoMIV endonuclease. The chain is Type II methyltransferase M.NgoMIV (ngoMIVM) from Neisseria gonorrhoeae.